Reading from the N-terminus, the 671-residue chain is DNA ligase (671 aa).

NAD(+)-binding positions include 32–36 (DAEYD), 81–82 (SL), and Glu113. The active-site N6-AMP-lysine intermediate is the Lys115. The NAD(+) site is built by Arg136, Glu173, Lys290, and Lys314. Residues Cys408, Cys411, Cys426, and Cys432 each contribute to the Zn(2+) site. The BRCT domain maps to 593–671 (EIDSPFAGKT…EAEMIRLLGA (79 aa)).

Belongs to the NAD-dependent DNA ligase family. LigA subfamily. The cofactor is Mg(2+). Mn(2+) serves as cofactor.

The catalysed reaction is NAD(+) + (deoxyribonucleotide)n-3'-hydroxyl + 5'-phospho-(deoxyribonucleotide)m = (deoxyribonucleotide)n+m + AMP + beta-nicotinamide D-nucleotide.. Its function is as follows. DNA ligase that catalyzes the formation of phosphodiester linkages between 5'-phosphoryl and 3'-hydroxyl groups in double-stranded DNA using NAD as a coenzyme and as the energy source for the reaction. It is essential for DNA replication and repair of damaged DNA. In Salmonella choleraesuis (strain SC-B67), this protein is DNA ligase.